Consider the following 333-residue polypeptide: Biotin synthase (333 aa).

The region spanning 51-281 (HFGNQVSLCG…DVHITICGGR (231 aa)) is the Radical SAM core domain. Cys69, Cys73, and Cys76 together coordinate [4Fe-4S] cluster. Residue Cys206 participates in [2Fe-2S] cluster binding.

It belongs to the radical SAM superfamily. Biotin synthase family. As to quaternary structure, homodimer. It depends on [4Fe-4S] cluster as a cofactor. The cofactor is [2Fe-2S] cluster.

The enzyme catalyses (4R,5S)-dethiobiotin + (sulfur carrier)-SH + 2 reduced [2Fe-2S]-[ferredoxin] + 2 S-adenosyl-L-methionine = (sulfur carrier)-H + biotin + 2 5'-deoxyadenosine + 2 L-methionine + 2 oxidized [2Fe-2S]-[ferredoxin]. Its pathway is cofactor biosynthesis; biotin biosynthesis; biotin from 7,8-diaminononanoate: step 2/2. In terms of biological role, catalyzes the conversion of dethiobiotin (DTB) to biotin by the insertion of a sulfur atom into dethiobiotin via a radical-based mechanism. The protein is Biotin synthase of Trichlorobacter lovleyi (strain ATCC BAA-1151 / DSM 17278 / SZ) (Geobacter lovleyi).